Consider the following 1220-residue polypeptide: Post-transcriptional regulator MKT1L (1220 aa).

Residues 1–107 (MRKAGANRNN…SPWNSPPQQT (107 aa)) are disordered. Basic residues predominate over residues 34 to 70 (PHHHQHQHHHQHQHQHQHQHQHPHQHPHQHHHHHPHH).

This sequence belongs to the XPG/RAD2 endonuclease family. As to quaternary structure, forms a complex composed of at least MKT1L, PBP1, XAC1 and LSM12.

The protein resides in the cytoplasm. Functionally, involved in post-transcriptional regulation of gene expression. In Trypanosoma brucei brucei (strain 927/4 GUTat10.1), this protein is Post-transcriptional regulator MKT1L.